The following is a 648-amino-acid chain: MTKEEYDLNIEKLISWANAYYVFDNPIATDEEYDKLARLCLAYEQENPKLSHPNSPNKRVGGIVLDGFIKASHLSRMWSQEDVFNTQELEDWIKRASKVNTNLEFFCQPKFDGASLNLIYENGILKQAITRGDGTVGEDVTNNAKTIFSIPLEIEEKSLIEIRGEVVIKKADFEKINIERAKNGEQLFANPRNAAAGSLRQLDSNITAKRKLFFNVWGIGQNSLEHKKYSQIMEYIYSLGFERPQMQTLASNIEEIESLYHKFISIRNDFEMMLDGMVIKIDDIETQEELGYTVKFPRWSCAYKFPAVEKTTKLKAITLQVGRTGIITPVAEVEPTLIDGSTVSRATLHNFDEIERLDLKINDEVIIIKSGDIIPKITKVFFERRKGDEITISRPTSCPTCNSEVLDEGTMIKCQNLDCPSRVVNSIIYFASKNCMNIDGLGNKIVEQLFNEKKIYDILDIYSLKYEDLQDLEGFKEKKINNLLNAIENTKGSELHRVINALGIEHIGEVASKQICLEFGLDVINKDYDSLIALDGFGEQMANSFIEFMRVNKNLVEKLISIINPKVEIKKEVSENPFKNKTVVITGTMSKSRGEIKSMLEDLGAKVSSSVSKKTDYVIFGEDAGSKYDKAIELGVKLLTEEEMNSLF.

Residues 30-34 and 79-80 contribute to the NAD(+) site; these read DEEYD and SQ. Lys-110 (N6-AMP-lysine intermediate) is an active-site residue. Residues Arg-131, Glu-165, Lys-280, and Lys-304 each contribute to the NAD(+) site. 4 residues coordinate Zn(2+): Cys-398, Cys-401, Cys-414, and Cys-419. A BRCT domain is found at 573–648; sequence VSENPFKNKT…LTEEEMNSLF (76 aa).

The protein belongs to the NAD-dependent DNA ligase family. LigA subfamily. Mg(2+) serves as cofactor. Requires Mn(2+) as cofactor.

It carries out the reaction NAD(+) + (deoxyribonucleotide)n-3'-hydroxyl + 5'-phospho-(deoxyribonucleotide)m = (deoxyribonucleotide)n+m + AMP + beta-nicotinamide D-nucleotide.. In terms of biological role, DNA ligase that catalyzes the formation of phosphodiester linkages between 5'-phosphoryl and 3'-hydroxyl groups in double-stranded DNA using NAD as a coenzyme and as the energy source for the reaction. It is essential for DNA replication and repair of damaged DNA. This chain is DNA ligase, found in Aliarcobacter butzleri (strain RM4018) (Arcobacter butzleri).